The following is a 177-amino-acid chain: Ribulose bisphosphate carboxylase small subunit, chloroplastic 2 (177 aa).

Residues 1–56 constitute a chloroplast transit peptide; it reads MASSMMASTAAVARAGPAQSNMVAPFNGLRSSVAFPATRKANKNLSTLPSNGGKVS.

This sequence belongs to the RuBisCO small chain family. In terms of assembly, heterohexadecamer of 8 large and 8 small subunits.

The protein localises to the plastid. It is found in the chloroplast. Functionally, ruBisCO catalyzes two reactions: the carboxylation of D-ribulose 1,5-bisphosphate, the primary event in carbon dioxide fixation, as well as the oxidative fragmentation of the pentose substrate. Both reactions occur simultaneously and in competition at the same active site. Although the small subunit is not catalytic it is essential for maximal activity. The sequence is that of Ribulose bisphosphate carboxylase small subunit, chloroplastic 2 from Lemna gibba (Swollen duckweed).